We begin with the raw amino-acid sequence, 486 residues long: Zinc metalloproteinase-disintegrin VMP-II (486 aa).

The first 20 residues, 1-20 (MIQVLLVTICLAVFPYQGSS), serve as a signal peptide directing secretion. Residues 21–190 (IILESGNVND…KASQSNLPPE (170 aa)) constitute a propeptide that is removed on maturation. At Q191 the chain carries Pyrrolidone carboxylic acid. Residues 197-394 (RYIELVVVAD…HYTTCLYNEP (198 aa)) form the Peptidase M12B domain. Ca(2+) contacts are provided by E200 and D284. 3 disulfides stabilise this stretch: C308–C389, C348–C372, and C350–C355. Residue H333 coordinates Zn(2+). E334 is a catalytic residue. Zn(2+)-binding residues include H337 and H343. Residues C389 and N392 each coordinate Ca(2+). The region spanning 402 to 486 (PPVCGNYYTE…AECPNKGYYG (85 aa)) is the Disintegrin domain. Intrachain disulfides connect C405-C424, C416-C434, C418-C429, C428-C451, C442-C448, C447-C472, and C460-C479. Positions 464–466 (RGD) match the Cell attachment site motif.

Belongs to the venom metalloproteinase (M12B) family. P-II subfamily. P-IIb sub-subfamily. In terms of assembly, monomer. Zn(2+) is required as a cofactor. Expressed by the venom gland.

It is found in the secreted. In terms of biological role, snake venom zinc metalloproteinase that inhibits ADP-induced platelet aggregation (probably by binding integrin alpha-IIb/beta-3 (ITGA2B/ITGB3)) and degrades fibrinogen. This Crotalus atrox (Western diamondback rattlesnake) protein is Zinc metalloproteinase-disintegrin VMP-II.